We begin with the raw amino-acid sequence, 919 residues long: MEELTIWEQHTATLSKDPRRGFGIAISGGRDRPGGSMVVSDVVPGGPAEGRLQTGDHIVMVNGVSMENATSAFAIQILKTCTKMANITVKRPRRIHLPATKASPSSPGRQDSDEDDGPQRVEEVDQGRGYDGDSSSGSGRSWDERSRRPRPGRRGRAGSHGRRSPGGGSEANGLALVSGFKRLPRQDVQMKPVKSVLVKRRDSEEFGVKLGSQIFIKHITDSGLAARHRGLQEGDLILQINGVSSQNLSLNDTRRLIEKSEGKLSLLVLRDRGQFLVNIPPAVSDSDSSPLEDISDLASELSQAPPSHIPPPPRHAQRSPEASQTDSPVESPRLRRESSVDSRTISEPDEQRSELPRESSYDIYRVPSSQSMEDRGYSPDTRVVRFLKGKSIGLRLAGGNDVGIFVSGVQAGSPADGQGIQEGDQILQVNDVPFQNLTREEAVQFLLGLPPGEEMELVTQRKQDIFWKMVQSRVGDSFYIRTHFELEPSPPSGLGFTRGDVFHVLDTLHPGPGQSHARGGHWLAVRMGRDLREQERGIIPNQSRAEQLASLEAAQRAVGVGPGSSAGSNARAEFWRLRGLRRGAKKTTQRSREDLSALTRQGRYPPYERVVLREASFKRPVVILGPVADIAMQKLTAEMPDQFEIAETVSRTDSPSKIIKLDTVRVIAEKDKHALLDVTPSAIERLNYVQYYPIVVFFIPESRPALKALRQWLAPASRRSTRRLYAQAQKLRKHSSHLFTATIPLNGTSDTWYQELKAIIREQQTRPIWTAEDQLDGSLEDNLDLPHHGLADSSADLSCDSRVNSDYETDGEGGAYTDGEGYTDGEGGPYTDVDDEPPAPALARSSEPVQADESQSPRDRGRISAHQGAQVDSRHPQGQWRQDSMRTYEREALKKKFMRVHDAESSDEDGYDWGPATDL.

The region spanning 11–93 is the PDZ 1 domain; the sequence is TATLSKDPRR…MANITVKRPR (83 aa). The disordered stretch occupies residues 92–173; it reads PRRIHLPATK…SPGGGSEANG (82 aa). S112 is subject to Phosphoserine. Positions 117–131 are enriched in basic and acidic residues; the sequence is GPQRVEEVDQGRGYD. Position 136 is a phosphoserine (S136). Positions 147-163 are enriched in basic residues; it reads RRPRPGRRGRAGSHGRR. Residues S164, S169, S203, and S319 each carry the phosphoserine modification. Positions 195–272 constitute a PDZ 2 domain; the sequence is SVLVKRRDSE…KLSLLVLRDR (78 aa). A disordered region spans residues 279–377; sequence IPPAVSDSDS…SSQSMEDRGY (99 aa). T325 carries the phosphothreonine modification. S327 is subject to Phosphoserine. Residues 332-360 show a composition bias toward basic and acidic residues; sequence PRLRRESSVDSRTISEPDEQRSELPRESS. S371 carries the phosphoserine modification. In terms of domain architecture, PDZ 3 spans 380-446; sequence DTRVVRFLKG…LTREEAVQFL (67 aa). Positions 475 to 549 constitute an SH3 domain; sequence GDSFYIRTHF…PNQSRAEQLA (75 aa). Residues 580-761 enclose the Guanylate kinase-like domain; the sequence is LRRGAKKTTQ…WYQELKAIIR (182 aa). S591 is modified (phosphoserine). Positions 791–801 are enriched in low complexity; sequence ADSSADLSCDS. Disordered regions lie at residues 791–886 and 899–919; these read ADSS…DSMR and RVHD…ATDL. Residues 812–828 show a composition bias toward gly residues; that stretch reads EGGAYTDGEGYTDGEGG. Phosphoserine occurs at positions 856, 905, and 906.

Belongs to the MAGUK family. In terms of assembly, interacts with occludin OCLN, claudins and TPJ1. Interacts with PATJ. Interacts with UBN1. Interacts with FASLG. Interacts with CCND1. Phosphorylated.

Its subcellular location is the cell membrane. The protein localises to the cell junction. The protein resides in the tight junction. It is found in the nucleus. TJP1, TJP2, and TJP3 are closely related scaffolding proteins that link tight junction (TJ) transmembrane proteins such as claudins, junctional adhesion molecules, and occludin to the actin cytoskeleton. The tight junction acts to limit movement of substances through the paracellular space and as a boundary between the compositionally distinct apical and basolateral plasma membrane domains of epithelial and endothelial cells. Binds and recruits PATJ to tight junctions where it connects and stabilizes apical and lateral components of tight junctions. Promotes cell-cycle progression through the sequestration of cyclin D1 (CCND1) at tight junctions during mitosis which prevents CCND1 degradation during M-phase and enables S-phase transition. With TJP1 and TJP2, participates in the junctional retention and stability of the transcription factor DBPA, but is not involved in its shuttling to the nucleus. Contrary to TJP2, TJP3 is dispensable for individual viability, embryonic development, epithelial differentiation, and the establishment of TJs, at least in the laboratory environment. This chain is Tight junction protein ZO-3 (TJP3), found in Homo sapiens (Human).